A 241-amino-acid polypeptide reads, in one-letter code: Probable 2-phosphosulfolactate phosphatase (241 aa).

Belongs to the ComB family. Mg(2+) serves as cofactor.

The enzyme catalyses (2R)-O-phospho-3-sulfolactate + H2O = (2R)-3-sulfolactate + phosphate. The chain is Probable 2-phosphosulfolactate phosphatase from Gloeothece citriformis (strain PCC 7424) (Cyanothece sp. (strain PCC 7424)).